The chain runs to 372 residues: Glutamate 5-kinase (372 aa).

K14 contacts ATP. Positions 54, 141, and 153 each coordinate substrate. 173–174 provides a ligand contact to ATP; sequence TD. In terms of domain architecture, PUA spans 280–358; the sequence is RGHVVIDDGA…GEIESVLGYM (79 aa).

The protein belongs to the glutamate 5-kinase family.

The protein localises to the cytoplasm. The enzyme catalyses L-glutamate + ATP = L-glutamyl 5-phosphate + ADP. It participates in amino-acid biosynthesis; L-proline biosynthesis; L-glutamate 5-semialdehyde from L-glutamate: step 1/2. Catalyzes the transfer of a phosphate group to glutamate to form L-glutamate 5-phosphate. The polypeptide is Glutamate 5-kinase (Paraburkholderia xenovorans (strain LB400)).